We begin with the raw amino-acid sequence, 258 residues long: Pimeloyl-[acyl-carrier protein] methyl ester esterase (258 aa).

Positions 16-242 constitute an AB hydrolase-1 domain; sequence LVLLHGWGLN…AAHAPFISHP (227 aa). Substrate-binding positions include Trp22, 82–83, and 143–147; these read SL and FLALQ. Ser82 functions as the Nucleophile in the catalytic mechanism. Residues Asp207 and His235 contribute to the active site. His235 lines the substrate pocket.

The protein belongs to the AB hydrolase superfamily. Carboxylesterase BioH family. In terms of assembly, monomer.

The protein resides in the cytoplasm. It carries out the reaction 6-carboxyhexanoyl-[ACP] methyl ester + H2O = 6-carboxyhexanoyl-[ACP] + methanol + H(+). The protein operates within cofactor biosynthesis; biotin biosynthesis. The physiological role of BioH is to remove the methyl group introduced by BioC when the pimeloyl moiety is complete. It allows to synthesize pimeloyl-ACP via the fatty acid synthetic pathway through the hydrolysis of the ester bonds of pimeloyl-ACP esters. The polypeptide is Pimeloyl-[acyl-carrier protein] methyl ester esterase (Edwardsiella ictaluri (strain 93-146)).